Here is a 560-residue protein sequence, read N- to C-terminus: Dihydroxy-acid dehydratase (560 aa).

[2Fe-2S] cluster is bound at residue cysteine 52. A Mg(2+)-binding site is contributed by aspartate 84. Residue cysteine 125 participates in [2Fe-2S] cluster binding. Mg(2+)-binding residues include aspartate 126 and lysine 127. Lysine 127 is subject to N6-carboxylysine. Residue cysteine 197 coordinates [2Fe-2S] cluster. Glutamate 448 is a binding site for Mg(2+). The Proton acceptor role is filled by serine 474.

This sequence belongs to the IlvD/Edd family. Homodimer. [2Fe-2S] cluster serves as cofactor. The cofactor is Mg(2+).

The catalysed reaction is (2R)-2,3-dihydroxy-3-methylbutanoate = 3-methyl-2-oxobutanoate + H2O. It catalyses the reaction (2R,3R)-2,3-dihydroxy-3-methylpentanoate = (S)-3-methyl-2-oxopentanoate + H2O. Its pathway is amino-acid biosynthesis; L-isoleucine biosynthesis; L-isoleucine from 2-oxobutanoate: step 3/4. The protein operates within amino-acid biosynthesis; L-valine biosynthesis; L-valine from pyruvate: step 3/4. Functions in the biosynthesis of branched-chain amino acids. Catalyzes the dehydration of (2R,3R)-2,3-dihydroxy-3-methylpentanoate (2,3-dihydroxy-3-methylvalerate) into 2-oxo-3-methylpentanoate (2-oxo-3-methylvalerate) and of (2R)-2,3-dihydroxy-3-methylbutanoate (2,3-dihydroxyisovalerate) into 2-oxo-3-methylbutanoate (2-oxoisovalerate), the penultimate precursor to L-isoleucine and L-valine, respectively. This chain is Dihydroxy-acid dehydratase, found in Francisella tularensis subsp. novicida (strain U112).